The chain runs to 334 residues: S-adenosylmethionine:tRNA ribosyltransferase-isomerase (334 aa).

It belongs to the QueA family. As to quaternary structure, monomer.

Its subcellular location is the cytoplasm. It carries out the reaction 7-aminomethyl-7-carbaguanosine(34) in tRNA + S-adenosyl-L-methionine = epoxyqueuosine(34) in tRNA + adenine + L-methionine + 2 H(+). The protein operates within tRNA modification; tRNA-queuosine biosynthesis. In terms of biological role, transfers and isomerizes the ribose moiety from AdoMet to the 7-aminomethyl group of 7-deazaguanine (preQ1-tRNA) to give epoxyqueuosine (oQ-tRNA). This is S-adenosylmethionine:tRNA ribosyltransferase-isomerase from Rubrobacter xylanophilus (strain DSM 9941 / JCM 11954 / NBRC 16129 / PRD-1).